A 217-amino-acid chain; its full sequence is Elongation factor Ts (217 aa).

Residues 82 to 85 are involved in Mg(2+) ion dislocation from EF-Tu; the sequence is TDFV.

It belongs to the EF-Ts family.

The protein localises to the cytoplasm. In terms of biological role, associates with the EF-Tu.GDP complex and induces the exchange of GDP to GTP. It remains bound to the aminoacyl-tRNA.EF-Tu.GTP complex up to the GTP hydrolysis stage on the ribosome. This chain is Elongation factor Ts, found in Desulfitobacterium hafniense (strain DSM 10664 / DCB-2).